A 119-amino-acid chain; its full sequence is Large ribosomal subunit protein eL31z (119 aa).

This sequence belongs to the eukaryotic ribosomal protein eL31 family.

This chain is Large ribosomal subunit protein eL31z (RPL31A), found in Arabidopsis thaliana (Mouse-ear cress).